We begin with the raw amino-acid sequence, 468 residues long: Phosphoglucosamine mutase (468 aa).

The active-site Phosphoserine intermediate is serine 112. Mg(2+) is bound by residues serine 112, aspartate 254, aspartate 256, and aspartate 258. Serine 112 bears the Phosphoserine mark.

This sequence belongs to the phosphohexose mutase family. The cofactor is Mg(2+). Post-translationally, activated by phosphorylation.

The catalysed reaction is alpha-D-glucosamine 1-phosphate = D-glucosamine 6-phosphate. In terms of biological role, catalyzes the conversion of glucosamine-6-phosphate to glucosamine-1-phosphate. This is Phosphoglucosamine mutase from Prochlorococcus marinus (strain MIT 9313).